The primary structure comprises 228 residues: Urease accessory protein UreG (228 aa).

Residue 34–41 (GPVGSGKT) coordinates GTP.

The protein belongs to the SIMIBI class G3E GTPase family. UreG subfamily. Homodimer. UreD, UreF and UreG form a complex that acts as a GTP-hydrolysis-dependent molecular chaperone, activating the urease apoprotein by helping to assemble the nickel containing metallocenter of UreC. The UreE protein probably delivers the nickel.

It is found in the cytoplasm. Its function is as follows. Facilitates the functional incorporation of the urease nickel metallocenter. This process requires GTP hydrolysis, probably effectuated by UreG. In Rhodococcus opacus (strain B4), this protein is Urease accessory protein UreG.